We begin with the raw amino-acid sequence, 207 residues long: Varv peptide A/Kalata-B1 (207 aa).

Positions 1–20 (MKMFIVLVLSAAFALPAAFA) are cleaved as a signal peptide. The propeptide occupies 21–66 (TEQDVITLQAYEELLKNGAANGMTKTVISSPVLEEALVSYSKNKLG). Positions 67 to 95 (GLPVCGETCVGGTCNTPGCSCSWPVCTRN) form a cross-link, cyclopeptide (Gly-Asn). 3 disulfides stabilise this stretch: cysteine 71–cysteine 85, cysteine 75–cysteine 87, and cysteine 80–cysteine 92. A propeptide spanning residues 96-120 (SLESTKSANPLLEEALTAFAKKGLG) is cleaved from the precursor. The segment at residues 121–149 (GLPVCGETCVGGTCNTPGCTCSWPVCTRN) is a cross-link (cyclopeptide (Gly-Asn)). 3 disulfide bridges follow: cysteine 125–cysteine 139, cysteine 129–cysteine 141, and cysteine 134–cysteine 146. The propeptide occupies 150-174 (ALETQKPNHLLEEALVAFAKKGNLG). A cross-link (cyclopeptide (Gly-Asn)) is located at residues 175-203 (GLPVCGETCVGGTCNTPGCSCSWPVCTRN). Cystine bridges form between cysteine 179–cysteine 193, cysteine 183–cysteine 195, and cysteine 188–cysteine 200. A propeptide spanning residues 204–207 (ALAM) is cleaved from the precursor.

This sequence belongs to the cyclotide family. Moebius subfamily. In terms of processing, varv peptide A and kalata-B1 are cyclic peptides.

In terms of biological role, probably participates in a plant defense mechanism. Has hemolytic activity. This Viola odorata (Sweet violet) protein is Varv peptide A/Kalata-B1.